Here is a 358-residue protein sequence, read N- to C-terminus: Photosystem II protein D1 2 (358 aa).

Transmembrane regions (helical) follow at residues 28-45, 117-132, and 141-155; these read YVGW…AATT, HFLI…QWEL, and WICV…AAFA. Histidine 117 is a chlorophyll a binding site. Tyrosine 125 is a pheophytin a binding site. Residues aspartate 169 and glutamate 188 each contribute to the [CaMn4O5] cluster site. The chain crosses the membrane as a helical span at residues 196 to 217; the sequence is FHMLGVAGVFGGSLFSAMHGSL. Position 197 (histidine 197) interacts with chlorophyll a. A quinone-binding positions include histidine 214 and 263 to 264; that span reads SF. Residue histidine 214 participates in Fe cation binding. Histidine 271 is a Fe cation binding site. The helical transmembrane segment at 273-287 threads the bilayer; that stretch reads FLAAWPVVGIWFTSM. [CaMn4O5] cluster contacts are provided by histidine 331, glutamate 332, aspartate 341, and alanine 343. The propeptide occupies 344–358; sequence ATESTPVALQAPTIG.

Belongs to the reaction center PufL/M/PsbA/D family. In terms of assembly, PSII is composed of 1 copy each of membrane proteins PsbA, PsbB, PsbC, PsbD, PsbE, PsbF, PsbH, PsbI, PsbJ, PsbK, PsbL, PsbM, PsbT, PsbX, PsbY, PsbZ, Psb30/Ycf12, peripheral proteins PsbO, CyanoQ (PsbQ), PsbU, PsbV and a large number of cofactors. It forms dimeric complexes. The D1/D2 heterodimer binds P680, chlorophylls that are the primary electron donor of PSII, and subsequent electron acceptors. It shares a non-heme iron and each subunit binds pheophytin, quinone, additional chlorophylls, carotenoids and lipids. D1 provides most of the ligands for the Mn4-Ca-O5 cluster of the oxygen-evolving complex (OEC). There is also a Cl(-1) ion associated with D1 and D2, which is required for oxygen evolution. The PSII complex binds additional chlorophylls, carotenoids and specific lipids. serves as cofactor. In terms of processing, tyr-160 forms a radical intermediate that is referred to as redox-active TyrZ, YZ or Y-Z. Post-translationally, C-terminally processed by CtpA; processing is essential to allow assembly of the oxygen-evolving complex and thus photosynthetic growth.

It localises to the cellular thylakoid membrane. It carries out the reaction 2 a plastoquinone + 4 hnu + 2 H2O = 2 a plastoquinol + O2. Its function is as follows. Photosystem II (PSII) is a light-driven water:plastoquinone oxidoreductase that uses light energy to abstract electrons from H(2)O, generating O(2) and a proton gradient subsequently used for ATP formation. It consists of a core antenna complex that captures photons, and an electron transfer chain that converts photonic excitation into a charge separation. The D1/D2 (PsbA/PsbD) reaction center heterodimer binds P680, the primary electron donor of PSII as well as several subsequent electron acceptors. The protein is Photosystem II protein D1 2 of Synechococcus sp. (strain WH7803).